We begin with the raw amino-acid sequence, 538 residues long: CTP synthase (538 aa).

Residues 1–266 (MRTKYIFITG…DQKIVDLLNI (266 aa)) are amidoligase domain. Ser14 contacts CTP. Residue Ser14 participates in UTP binding. ATP contacts are provided by residues 15-20 (SLGKGL) and Asp72. Residues Asp72 and Glu140 each contribute to the Mg(2+) site. Residues 147–149 (DIE), 187–192 (KTKPTQ), and Lys223 each bind CTP. Residues 187–192 (KTKPTQ) and Lys223 contribute to the UTP site. An ATP-binding site is contributed by 239–241 (KDV). The Glutamine amidotransferase type-1 domain maps to 291-533 (NIAIVGKYVN…IEAALRYRKK (243 aa)). Gly353 lines the L-glutamine pocket. The active-site Nucleophile; for glutamine hydrolysis is Cys380. Residues 381 to 384 (LGMQ), Glu404, and Arg461 each bind L-glutamine. Active-site residues include His506 and Glu508.

This sequence belongs to the CTP synthase family. In terms of assembly, homotetramer.

It catalyses the reaction UTP + L-glutamine + ATP + H2O = CTP + L-glutamate + ADP + phosphate + 2 H(+). The enzyme catalyses L-glutamine + H2O = L-glutamate + NH4(+). It carries out the reaction UTP + NH4(+) + ATP = CTP + ADP + phosphate + 2 H(+). The protein operates within pyrimidine metabolism; CTP biosynthesis via de novo pathway; CTP from UDP: step 2/2. Allosterically activated by GTP, when glutamine is the substrate; GTP has no effect on the reaction when ammonia is the substrate. The allosteric effector GTP functions by stabilizing the protein conformation that binds the tetrahedral intermediate(s) formed during glutamine hydrolysis. Inhibited by the product CTP, via allosteric rather than competitive inhibition. Its function is as follows. Catalyzes the ATP-dependent amination of UTP to CTP with either L-glutamine or ammonia as the source of nitrogen. Regulates intracellular CTP levels through interactions with the four ribonucleotide triphosphates. In Syntrophus aciditrophicus (strain SB), this protein is CTP synthase.